The chain runs to 456 residues: RNA polymerase II-associated protein 1 homolog (456 aa).

Residues 382–456 (LRSVEGSLNE…PVEQLQNEED (75 aa)) form a disordered region. S388 is modified (phosphoserine). Residues 396–406 (EEKPAESREQL) show a composition bias toward basic and acidic residues. Polar residues-rich tracts occupy residues 408–433 (SAEQTNGVKPETQAQNMSASESQANS) and 441–456 (GNTQPSPVEQLQNEED).

It belongs to the PAF1 family.

The protein resides in the cytoplasm. It localises to the nucleus. This chain is RNA polymerase II-associated protein 1 homolog, found in Schizosaccharomyces pombe (strain 972 / ATCC 24843) (Fission yeast).